Reading from the N-terminus, the 179-residue chain is Large ribosomal subunit protein uL5 (179 aa).

Belongs to the universal ribosomal protein uL5 family. Part of the 50S ribosomal subunit; part of the 5S rRNA/L5/L18/L25 subcomplex. Contacts the 5S rRNA and the P site tRNA. Forms a bridge to the 30S subunit in the 70S ribosome.

In terms of biological role, this is one of the proteins that bind and probably mediate the attachment of the 5S RNA into the large ribosomal subunit, where it forms part of the central protuberance. In the 70S ribosome it contacts protein S13 of the 30S subunit (bridge B1b), connecting the 2 subunits; this bridge is implicated in subunit movement. Contacts the P site tRNA; the 5S rRNA and some of its associated proteins might help stabilize positioning of ribosome-bound tRNAs. The polypeptide is Large ribosomal subunit protein uL5 (Desulforapulum autotrophicum (strain ATCC 43914 / DSM 3382 / VKM B-1955 / HRM2) (Desulfobacterium autotrophicum)).